Here is a 168-residue protein sequence, read N- to C-terminus: Disulfide bond formation protein B 1 (168 aa).

Over 1–14 (MNELTSRLNRERRF) the chain is Cytoplasmic. The chain crosses the membrane as a helical span at residues 15-31 (LVLLGVICLALIGGALY). The Periplasmic portion of the chain corresponds to 32 to 49 (MQVVLGEAPCPLCILQRY). A disulfide bridge links Cys41 with Cys44. The helical transmembrane segment at 50–65 (ALLFIAIFAFIAAAMP) threads the bilayer. Topologically, residues 66 to 72 (GRKSLTF) are cytoplasmic. The helical transmembrane segment at 73 to 89 (FEVLVVLSAIGGIVAAG) threads the bilayer. Topologically, residues 90-144 (NHVYILANPMVSCGIDTLQPIVDDLPLAKLWPLAFQVDGFCSTPYPPILGLSLAQ) are periplasmic. Cys102 and Cys130 are disulfide-bonded. The chain crosses the membrane as a helical span at residues 145–163 (WALVAFVLTTVLVPLGIYR). Residues 164-168 (NRRRG) lie on the Cytoplasmic side of the membrane.

This sequence belongs to the DsbB family.

Its subcellular location is the cell inner membrane. Functionally, required for disulfide bond formation in some periplasmic proteins. Acts by oxidizing the DsbA protein. This chain is Disulfide bond formation protein B 1, found in Pseudomonas entomophila (strain L48).